We begin with the raw amino-acid sequence, 375 residues long: Queuine tRNA-ribosyltransferase (375 aa).

Residue aspartate 89 is the Proton acceptor of the active site. Substrate contacts are provided by residues 89-93 (DSGGF), aspartate 143, glutamine 187, and glycine 214. The RNA binding stretch occupies residues 245–251 (GVGKPED). Aspartate 264 (nucleophile) is an active-site residue. The RNA binding; important for wobble base 34 recognition stretch occupies residues 269–273 (TRNAR). Cysteine 302, cysteine 304, cysteine 307, and histidine 333 together coordinate Zn(2+).

The protein belongs to the queuine tRNA-ribosyltransferase family. Homodimer. Within each dimer, one monomer is responsible for RNA recognition and catalysis, while the other monomer binds to the replacement base PreQ1. It depends on Zn(2+) as a cofactor.

The enzyme catalyses 7-aminomethyl-7-carbaguanine + guanosine(34) in tRNA = 7-aminomethyl-7-carbaguanosine(34) in tRNA + guanine. The protein operates within tRNA modification; tRNA-queuosine biosynthesis. Catalyzes the base-exchange of a guanine (G) residue with the queuine precursor 7-aminomethyl-7-deazaguanine (PreQ1) at position 34 (anticodon wobble position) in tRNAs with GU(N) anticodons (tRNA-Asp, -Asn, -His and -Tyr). Catalysis occurs through a double-displacement mechanism. The nucleophile active site attacks the C1' of nucleotide 34 to detach the guanine base from the RNA, forming a covalent enzyme-RNA intermediate. The proton acceptor active site deprotonates the incoming PreQ1, allowing a nucleophilic attack on the C1' of the ribose to form the product. After dissociation, two additional enzymatic reactions on the tRNA convert PreQ1 to queuine (Q), resulting in the hypermodified nucleoside queuosine (7-(((4,5-cis-dihydroxy-2-cyclopenten-1-yl)amino)methyl)-7-deazaguanosine). The polypeptide is Queuine tRNA-ribosyltransferase (Klebsiella pneumoniae subsp. pneumoniae (strain ATCC 700721 / MGH 78578)).